The primary structure comprises 809 residues: MSVAIKFTVKINDGSLRRQQTRHVFLSPAALNRLKLSPSQVIYLKHKGGEAVGITQSVKGNGIGPFEILISPLLAKWANLKAFQRVNISQYVHPLKEAEGIKIVASLSSNNEPIPESLIRKELLEIRYLHPGMIVMGESPMNMAKSGSKNLSSENMATEIFEINSGLSAQSGTEVGSSQSSPSVNESEPKATEDLDELSPGSYKVKEIHIRSPSNLIEAISDMSLDEPRIYKFTAASSMEIETPDLLKLPHEDRTQSAYNQGSEETQNFDGPPSAVTFSSIGGLQAQIAQIRDIVELPFQNPELFKFFNIMPPRGVLLYGPPGTGKTMVMRAVAAEANAQVFTIDGPSVVGKYLGETESRLRKIFEDARAHQPSIIFIDEIDALAPKRTEDVSEAESRAVATLLTLLDGMANAGKVVVIAATNRPNSIDEALRRPGRLEKEIEIGIPDKSARLDIIKLLLSGVPNEINDAQLEDLASRTHAYVGADLAAVVREAALRAIKRTISLQKDTSGLDIFGAVQMDDLEFALSSVRQSAMREFMMESPNVHWSDIGGQEEVKQKLKESVEWPLTHGETFSRLGVRPPKGVLLYGPPGCSKTITAKAIATETGLNFIAVKGPELFDKFVGESERAVRQVFQKARQASPSVIFFDEIDALTANRGEDNSSDRVVAALLNELDGIEALRNVLVLAATNRPDMIDPALMRPGRLDRLLYVGPPNFEARKQIVKIQAEKMKFAEDVDLDLIAEKTEGCSGAEVVALCQEAGLIAMHEDLEAKEICQAHFKTALLALRKAITRDMLEYYASFSESVTSIS.

The segment at 169 to 199 (AQSGTEVGSSQSSPSVNESEPKATEDLDELS) is disordered. A compositionally biased stretch (low complexity) spans 170 to 186 (QSGTEVGSSQSSPSVNE). ATP-binding positions include 320–327 (GPPGTGKT) and 589–596 (GPPGCSKT).

Belongs to the AAA ATPase family. AFG2 subfamily. As to quaternary structure, homohexamer; ATP binding induces oligomerization. Forms a ring-shaped particle of about 12 nm diameter, that displays 6-fold radial symmetry. Associates with cytoplasmic pre-60S ribosomal particles.

It localises to the cytoplasm. The catalysed reaction is ATP + H2O = ADP + phosphate + H(+). Its function is as follows. ATP-dependent chaperone which uses the energy provided by ATP hydrolysis to generate mechanical force to disassemble protein complexes. Plays an essential role in the cytoplasmic maturation steps of pre-60S ribosomal particles by promoting the release of shuttling protein rlp24 from the pre-ribosomal particles. This step facilitates the subsequent release of other shuttling proteins such as nog1 and allows the transition of the pre-ribosomal particles to later maturation forms that bind SPCC550.15c/REI1. This Schizosaccharomyces pombe (strain 972 / ATCC 24843) (Fission yeast) protein is ATPase family gene 2 protein (afg2).